A 289-amino-acid chain; its full sequence is Ketose 3-epimerase (289 aa).

Residue Glu146 is the Proton donor/acceptor of the active site. Glu146 is a binding site for Mn(2+). Substrate contacts are provided by residues Glu152 and 179–182 (DTYH). Mn(2+) contacts are provided by Asp179 and His205. Position 211 (Arg211) interacts with substrate. Glu240 (proton donor/acceptor) is an active-site residue. Position 240 (Glu240) interacts with Mn(2+).

Belongs to the hyi family. In terms of assembly, homotetramer. Mg(2+) serves as cofactor. The cofactor is Mn(2+). Co(2+) is required as a cofactor.

The catalysed reaction is L-ribulose = L-xylulose. It carries out the reaction D-allulose = keto-D-fructose. It catalyses the reaction keto-L-tagatose = keto-L-sorbose. The enzyme catalyses D-ribulose = D-xylulose. The catalysed reaction is L-allulose = keto-L-fructose. It carries out the reaction keto-D-tagatose = keto-D-sorbose. Functionally, catalyzes the reversible C-3 epimerization of several ketoses. Shows the highest enzymatic activity for the epimerization of L-ribulose to L-xylulose. Is also able to convert D-allulose (also known as D-psicose) to D-fructose and, to a lesser extent, L-tagatose to L-sorbose, D-ribulose to D-xylulose, L-allulose to L-fructose and D-tagatose to D-sorbose. This Arthrobacter globiformis protein is Ketose 3-epimerase.